Consider the following 445-residue polypeptide: Phosphoglucosamine mutase (445 aa).

S99 (phosphoserine intermediate) is an active-site residue. S99, D242, D244, and D246 together coordinate Mg(2+). S99 is subject to Phosphoserine.

This sequence belongs to the phosphohexose mutase family. It depends on Mg(2+) as a cofactor. Activated by phosphorylation.

It carries out the reaction alpha-D-glucosamine 1-phosphate = D-glucosamine 6-phosphate. In terms of biological role, catalyzes the conversion of glucosamine-6-phosphate to glucosamine-1-phosphate. This Helicobacter acinonychis (strain Sheeba) protein is Phosphoglucosamine mutase.